The chain runs to 345 residues: UDP-3-O-acylglucosamine N-acyltransferase (345 aa).

His248 acts as the Proton acceptor in catalysis.

It belongs to the transferase hexapeptide repeat family. LpxD subfamily. In terms of assembly, homotrimer.

It carries out the reaction a UDP-3-O-[(3R)-3-hydroxyacyl]-alpha-D-glucosamine + a (3R)-hydroxyacyl-[ACP] = a UDP-2-N,3-O-bis[(3R)-3-hydroxyacyl]-alpha-D-glucosamine + holo-[ACP] + H(+). It functions in the pathway bacterial outer membrane biogenesis; LPS lipid A biosynthesis. Catalyzes the N-acylation of UDP-3-O-acylglucosamine using 3-hydroxyacyl-ACP as the acyl donor. Is involved in the biosynthesis of lipid A, a phosphorylated glycolipid that anchors the lipopolysaccharide to the outer membrane of the cell. This chain is UDP-3-O-acylglucosamine N-acyltransferase, found in Prochlorococcus marinus (strain SARG / CCMP1375 / SS120).